Consider the following 122-residue polypeptide: Large ribosomal subunit protein bL12 (122 aa).

Belongs to the bacterial ribosomal protein bL12 family. In terms of assembly, homodimer. Part of the ribosomal stalk of the 50S ribosomal subunit. Forms a multimeric L10(L12)X complex, where L10 forms an elongated spine to which 2 to 4 L12 dimers bind in a sequential fashion. Binds GTP-bound translation factors.

In terms of biological role, forms part of the ribosomal stalk which helps the ribosome interact with GTP-bound translation factors. Is thus essential for accurate translation. The polypeptide is Large ribosomal subunit protein bL12 (Vibrio campbellii (strain ATCC BAA-1116)).